A 131-amino-acid polypeptide reads, in one-letter code: Small ribosomal subunit protein uS9 (131 aa).

The protein belongs to the universal ribosomal protein uS9 family.

The protein is Small ribosomal subunit protein uS9 of Haemophilus ducreyi (strain 35000HP / ATCC 700724).